Reading from the N-terminus, the 474-residue chain is tRNA-2-methylthio-N(6)-dimethylallyladenosine synthase (474 aa).

The MTTase N-terminal domain maps to 3–120 (KKLHIKTWGC…LPEMINSVRG (118 aa)). [4Fe-4S] cluster-binding residues include Cys-12, Cys-49, Cys-83, Cys-157, Cys-161, and Cys-164. The Radical SAM core domain maps to 143-378 (RADGPSAFVS…INQQVTAWSR (236 aa)). The region spanning 378-441 (RRMLGTTQRI…TNSMRGKVVR (64 aa)) is the TRAM domain.

It belongs to the methylthiotransferase family. MiaB subfamily. In terms of assembly, monomer. [4Fe-4S] cluster serves as cofactor.

It is found in the cytoplasm. It catalyses the reaction N(6)-dimethylallyladenosine(37) in tRNA + (sulfur carrier)-SH + AH2 + 2 S-adenosyl-L-methionine = 2-methylsulfanyl-N(6)-dimethylallyladenosine(37) in tRNA + (sulfur carrier)-H + 5'-deoxyadenosine + L-methionine + A + S-adenosyl-L-homocysteine + 2 H(+). Catalyzes the methylthiolation of N6-(dimethylallyl)adenosine (i(6)A), leading to the formation of 2-methylthio-N6-(dimethylallyl)adenosine (ms(2)i(6)A) at position 37 in tRNAs that read codons beginning with uridine. This chain is tRNA-2-methylthio-N(6)-dimethylallyladenosine synthase, found in Enterobacter sp. (strain 638).